The following is a 157-amino-acid chain: SUMO-conjugating enzyme UBC9-B (157 aa).

A UBC core domain is found at 4–157 (IALSRLAQER…VRAQAKKFSP (154 aa)). The segment at 13 to 18 (RKAWRK) is interaction with SUMO1. Cysteine 93 functions as the Glycyl thioester intermediate in the catalytic mechanism.

Belongs to the ubiquitin-conjugating enzyme family. In terms of assembly, forms a tight complex with rangap1 and ranbp2. Interacts with vsx1.

The protein localises to the nucleus. It participates in protein modification; protein sumoylation. Its function is as follows. Accepts the ubiquitin-like proteins sumo1, sumo2 and sumo3 from the uble1a-uble1b E1 complex and catalyzes their covalent attachment to other proteins with the help of an E3 ligase such as ranbp2 or cbx4. Essential for nuclear architecture and chromosome segregation. Mediates nuclear localization of vsx1. Required for progression through mitosis during organogenesis. The chain is SUMO-conjugating enzyme UBC9-B (ube2ib) from Danio rerio (Zebrafish).